Here is a 268-residue protein sequence, read N- to C-terminus: Tryptophan synthase alpha chain (268 aa).

Catalysis depends on proton acceptor residues E49 and D60.

Belongs to the TrpA family. Tetramer of two alpha and two beta chains.

It carries out the reaction (1S,2R)-1-C-(indol-3-yl)glycerol 3-phosphate + L-serine = D-glyceraldehyde 3-phosphate + L-tryptophan + H2O. The protein operates within amino-acid biosynthesis; L-tryptophan biosynthesis; L-tryptophan from chorismate: step 5/5. Functionally, the alpha subunit is responsible for the aldol cleavage of indoleglycerol phosphate to indole and glyceraldehyde 3-phosphate. This chain is Tryptophan synthase alpha chain, found in Escherichia coli (strain SMS-3-5 / SECEC).